A 233-amino-acid chain; its full sequence is Glycerol-3-phosphate acyltransferase (233 aa).

Helical transmembrane passes span 7–27 (WIIIAIICSYLIGAIPFGYII), 94–114 (ISIVFGAAAAIGHIKSIYIGF), 127–147 (VIAINPIIGLSGIGLFFIVAF), 153–173 (SIGSVVASFSVAVMMWIGVLI), and 185–205 (ISYESQIINLVAISLIVLLII).

The protein belongs to the PlsY family. As to quaternary structure, probably interacts with PlsX.

The protein localises to the cell membrane. It catalyses the reaction an acyl phosphate + sn-glycerol 3-phosphate = a 1-acyl-sn-glycero-3-phosphate + phosphate. Its pathway is lipid metabolism; phospholipid metabolism. In terms of biological role, catalyzes the transfer of an acyl group from acyl-phosphate (acyl-PO(4)) to glycerol-3-phosphate (G3P) to form lysophosphatidic acid (LPA). This enzyme utilizes acyl-phosphate as fatty acyl donor, but not acyl-CoA or acyl-ACP. The sequence is that of Glycerol-3-phosphate acyltransferase from Acholeplasma laidlawii.